We begin with the raw amino-acid sequence, 185 residues long: Ribosome-recycling factor (185 aa).

It belongs to the RRF family.

It is found in the cytoplasm. Functionally, responsible for the release of ribosomes from messenger RNA at the termination of protein biosynthesis. May increase the efficiency of translation by recycling ribosomes from one round of translation to another. The sequence is that of Ribosome-recycling factor from Bacillus cereus (strain ATCC 10987 / NRS 248).